A 685-amino-acid polypeptide reads, in one-letter code: Sodium/glucose cotransporter 4 (685 aa).

The disordered stretch occupies residues 1–20 (MNTELVAMEPGVSRNGVRTE). Residues 1–32 (MNTELVAMEPGVSRNGVRTETTTNPSLGLHTY) are Extracellular-facing. Residues 33-53 (DIVVVVIYFVFVLAVGIWSSI) traverse the membrane as a helical segment. Residues 54-71 (RASRGTVGGYFLAGRSMT) lie on the Cytoplasmic side of the membrane. The chain crosses the membrane as a helical span at residues 72-94 (WWPIGASLMSSNVGSGLFIGLAG). Residues 95–110 (TGAAGGLAVGGFEWNA) lie on the Extracellular side of the membrane. The chain crosses the membrane as a helical span at residues 111–131 (TFLLLALGWIFVPVYIAAGVV). Topologically, residues 132–153 (TMPQYLKKRFGGQRIQVYMSVL) are cytoplasmic. Residues 154-174 (SLILYIFTKISTDIFSGALFI) form a helical membrane-spanning segment. The Extracellular portion of the chain corresponds to 175–186 (QMALGWNLYLST). Residues 187 to 207 (VILLVVTAVYTIAGGLTAVIY) traverse the membrane as a helical segment. Over 208-213 (TDALQT) the chain is Cytoplasmic. The helical transmembrane segment at 214–234 (VIMVGGALVLMFLGFQEVGWY) threads the bilayer. Over 235-271 (PGLQQLYRQAIPNTTVPNTTCHLPRPDAFHMLRDPVN) the chain is Extracellular. Asn-247 carries an N-linked (GlcNAc...) asparagine glycan. The chain crosses the membrane as a helical span at residues 272–292 (GDIPWPGLIFGLTVLATWCWC). The Cytoplasmic portion of the chain corresponds to 293–313 (TDQVIVQRSLAAKNLSHAKGG). The helical transmembrane segment at 314 to 334 (SVLGGYLKILPMFFIVMPGMI) threads the bilayer. The Extracellular segment spans residues 335–379 (SRALYPDEVACVDPDICQRVCGARVGCSNIAYPKLVMALMPVGLR). The chain crosses the membrane as a helical span at residues 380–402 (GLMIAVIMAALMSSLTSIFNSSS). Over 403–423 (TLFAIDVWQRFRRQASEQELM) the chain is Cytoplasmic. The chain crosses the membrane as a helical span at residues 424–444 (VVGRLFVVFLVVISILWIPII). Over 445–455 (QSSNSGQLFDY) the chain is Extracellular. A helical membrane pass occupies residues 456–476 (IQSITSYLAPPITALFLLAIF). The Cytoplasmic portion of the chain corresponds to 477–483 (CKRVNEP). The chain crosses the membrane as a helical span at residues 484-504 (GAFWGLMFGLVVGILRMILEF). The Extracellular segment spans residues 505 to 526 (SYSAPACGEMDRRPAVLKDFHY). A helical transmembrane segment spans residues 527–547 (LYFALLLCGLTAIIIVVISFF). Topologically, residues 548–664 (TEPIPDDKLA…SIEEEPLWRR (117 aa)) are cytoplasmic. The segment at 577–616 (VSVNNTEDDNSPGLAGRPVVEGPAGDEEEANTTQGPEQPG) is disordered. A helical membrane pass occupies residues 665–685 (VCNINAIILLAINIFLWGYFA).

Belongs to the sodium:solute symporter (SSF) (TC 2.A.21) family.

The protein resides in the cell membrane. It carries out the reaction D-mannose(out) + n Na(+)(out) = D-mannose(in) + n Na(+)(in). Electrogenic Na(+)-coupled sugar symporter that may play a primary role in D-mannose and possibly D-fructose and D-glucose transport at the plasma membrane. Transporter activity is driven by a transmembrane Na(+) electrochemical gradient set by the Na(+)/K(+) pump. Exclusively recognizes sugar substrates having a pyranose ring with an axial hydroxyl group on carbon 2. The chain is Sodium/glucose cotransporter 4 (Slc5a9) from Mus musculus (Mouse).